Consider the following 324-residue polypeptide: Glyoxylate/hydroxypyruvate reductase B (324 aa).

Residues Arg237 and Glu266 contribute to the active site. Residue His285 is the Proton donor of the active site.

This sequence belongs to the D-isomer specific 2-hydroxyacid dehydrogenase family. GhrB subfamily. In terms of assembly, homodimer.

It is found in the cytoplasm. It carries out the reaction glycolate + NADP(+) = glyoxylate + NADPH + H(+). The enzyme catalyses (R)-glycerate + NAD(+) = 3-hydroxypyruvate + NADH + H(+). It catalyses the reaction (R)-glycerate + NADP(+) = 3-hydroxypyruvate + NADPH + H(+). Its function is as follows. Catalyzes the NADPH-dependent reduction of glyoxylate and hydroxypyruvate into glycolate and glycerate, respectively. The polypeptide is Glyoxylate/hydroxypyruvate reductase B (Enterobacter sp. (strain 638)).